A 280-amino-acid chain; its full sequence is 4-diphosphocytidyl-2-C-methyl-D-erythritol kinase (280 aa).

Residue Lys9 is part of the active site. 93-103 serves as a coordination point for ATP; that stretch reads PVAAGLGGGSS. The active site involves Asp135.

It belongs to the GHMP kinase family. IspE subfamily.

The enzyme catalyses 4-CDP-2-C-methyl-D-erythritol + ATP = 4-CDP-2-C-methyl-D-erythritol 2-phosphate + ADP + H(+). The protein operates within isoprenoid biosynthesis; isopentenyl diphosphate biosynthesis via DXP pathway; isopentenyl diphosphate from 1-deoxy-D-xylulose 5-phosphate: step 3/6. Catalyzes the phosphorylation of the position 2 hydroxy group of 4-diphosphocytidyl-2C-methyl-D-erythritol. The sequence is that of 4-diphosphocytidyl-2-C-methyl-D-erythritol kinase from Syntrophotalea carbinolica (strain DSM 2380 / NBRC 103641 / GraBd1) (Pelobacter carbinolicus).